Reading from the N-terminus, the 526-residue chain is Microphthalmia-associated transcription factor (526 aa).

Position 5 is a phosphoserine; by MTOR (serine 5). Disordered stretches follow at residues 20–54 (EPKT…STMT) and 155–179 (VLSS…SAPN). Positions 34–44 (SSSSAEHSGAS) are enriched in low complexity. At serine 180 the chain carries Phosphoserine; by MAPK. The interval 224-291 (DDVIDDIISL…PANLPNIKRE (68 aa)) is transactivation. Phosphoserine is present on serine 280. Lysine 289 is covalently cross-linked (Glycyl lysine isopeptide (Lys-Gly) (interchain with G-Cter in SUMO)). One can recognise a bHLH domain in the interval 311–364 (QKKDNHNLIERRRRFNINDRIKELGTLIPKSNDPDMRWNKGTILKASVDYIRKL). The stretch at 355 to 401 (KASVDYIRKLQREQQRAKDLENRQKKLEHANRHLLLRVQELEMQARA) forms a coiled coil. The segment at 374-395 (LENRQKKLEHANRHLLLRVQEL) is leucine-zipper. Positions 401–431 (AHGLSLIPSTGLCSPDLVNRIIKQEPVLENC) are DNA-binding regulation. Serine 405 carries the post-translational modification Phosphoserine; by GSK3. The residue at position 414 (serine 414) is a Phosphoserine. Lysine 423 is covalently cross-linked (Glycyl lysine isopeptide (Lys-Gly) (interchain with G-Cter in SUMO)). The residue at position 491 (serine 491) is a Phosphoserine. Residues 496–526 (TDPLLSSVSPGASKTSSRRSSMSAEETEHAC) form a disordered region. A compositionally biased stretch (low complexity) spans 507–519 (ASKTSSRRSSMSA). Serine 516 is modified (phosphoserine; by RPS6KA1).

This sequence belongs to the MiT/TFE family. In terms of assembly, homodimer or heterodimer; dimerization is mediated via the coiled coil region. Efficient DNA binding requires dimerization with another bHLH protein. Binds DNA in the form of homodimer or heterodimer with either TFE3, TFEB or TFEC. Interacts with small GTPases Rag (RagA/RRAGA, RagB/RRAGB, RagC/RRAGC and/or RagD/RRAGD); promoting its recruitment to lysosomal membrane in the presence of nutrients. Interacts with KARS1. Identified in a complex with HINT1 and CTNNB1. Interacts with VSX2. When nutrients are present, phosphorylation by MTOR at Ser-5 via non-canonical mTORC1 pathway promotes ubiquitination by the SCF(BTRC) complex, followed by degradation. Phosphorylation at Ser-405 significantly enhances the ability to bind the tyrosinase promoter. Phosphorylation by MARK3/cTAK1 at Ser-280 promotes association with 14-3-3/YWHA adapters and retention in the cytosol. Phosphorylated at Ser-180 and Ser-516 following KIT signaling, triggering a short live activation: Phosphorylation at Ser-180 and Ser-516 by MAPK and RPS6KA1, respectively, activate the transcription factor activity but also promote ubiquitination and subsequent degradation by the proteasome. Phosphorylated in response to blue light (415nm). Post-translationally, ubiquitinated by the SCF(BTRC) and SCF(FBXW11) complexes following phosphorylation ar Ser-5 by MTOR, leading to its degradation by the proteasome. Ubiquitinated following phosphorylation at Ser-180, leading to subsequent degradation by the proteasome. Deubiquitinated by USP13, preventing its degradation. In terms of tissue distribution, in the adult, expressed at high levels in the heart, skin, skeletal muscle, intestine, stomach, kidney, ovary, lung, spleen and brain. In the embryo, expressed in developing eye, ear, skin and heart. Isoform M is expressed in melanocytes and also in the embryonic and adult heart while isoform A and isoform H are more widely expressed.

It is found in the nucleus. The protein localises to the cytoplasm. The protein resides in the lysosome membrane. Transcription factor that acts as a master regulator of melanocyte survival and differentiation as well as melanosome biogenesis. Binds to M-boxes (5'-TCATGTG-3') and symmetrical DNA sequences (E-boxes) (5'-CACGTG-3') found in the promoter of pigmentation genes, such as tyrosinase (TYR). Involved in the cellular response to amino acid availability by acting downstream of MTOR: in the presence of nutrients, MITF phosphorylation by MTOR promotes its inactivation. Upon starvation or lysosomal stress, inhibition of MTOR induces MITF dephosphorylation, resulting in transcription factor activity. Plays an important role in melanocyte development by regulating the expression of tyrosinase (TYR) and tyrosinase-related protein 1 (TYRP1). Plays a critical role in the differentiation of various cell types, such as neural crest-derived melanocytes, mast cells, osteoclasts and optic cup-derived retinal pigment epithelium. The chain is Microphthalmia-associated transcription factor (Mitf) from Mus musculus (Mouse).